Reading from the N-terminus, the 322-residue chain is Sideroflexin-1 (322 aa).

Ser-2 is subject to N-acetylserine. The Mitochondrial matrix segment spans residues 2-102 (SGELPPNINI…MSAQVPMNMT (101 aa)). Residues 103–120 (ITGCMMTFYRTTPAVLFW) traverse the membrane as a helical segment. At 121 to 146 (QWVNQSFNAVVNYTNRSGDAPLTVNE) the chain is on the mitochondrial intermembrane side. Residues 147 to 167 (LGTAYVSATTGAVATALGLNA) traverse the membrane as a helical segment. Topologically, residues 168–174 (LTKRVSP) are mitochondrial matrix. A helical membrane pass occupies residues 175–195 (LVGRFVPFAAVAAANCINIPL). The Mitochondrial intermembrane segment spans residues 196–228 (MRQRELKVGIPVTDENGNRLGESASAAKQAITQ). The chain crosses the membrane as a helical span at residues 229–249 (VVVSRILMAAPGMAIPPFIMN). The Mitochondrial matrix segment spans residues 250–266 (TLEKKAFLKRFPWMSAP). Residues 267–287 (VQVGIVGFCLVFATPLCCALF) form a helical membrane-spanning segment. Residues 288 to 322 (PQKSSMSVTSLEAELQARIRETYPELRRVYFNKGL) are Mitochondrial intermembrane-facing.

The protein belongs to the sideroflexin family.

The protein resides in the mitochondrion inner membrane. It catalyses the reaction L-serine(in) = L-serine(out). The enzyme catalyses L-alanine(in) = L-alanine(out). It carries out the reaction L-cysteine(in) = L-cysteine(out). Its function is as follows. Amino acid transporter importing serine, an essential substrate of the mitochondrial branch of the one-carbon pathway, into mitochondria. Mitochondrial serine is then converted to glycine and formate, which exits to the cytosol where it is used to generate the charged folates that serve as one-carbon donors. May also transport other amino acids including alanine and cysteine. The protein is Sideroflexin-1 (SFXN1) of Ovis aries (Sheep).